The primary structure comprises 694 residues: Methionine--tRNA ligase (694 aa).

The 'HIGH' region signature appears at 12–22 (PYANGPLHLGH). Residues Cys143, Cys146, Cys156, and Cys159 each contribute to the Zn(2+) site. The 'KMSKS' region motif lies at 330-334 (KMSKS). Lys333 contributes to the ATP binding site. Residues 550-573 (MAAPAAPATTTKPAPSKADAKPAA) show a composition bias toward low complexity. The disordered stretch occupies residues 550 to 582 (MAAPAAPATTTKPAPSKADAKPAAVANPESQTT). Positions 591–694 (DFAKLDLRIG…SGAQPGMPVR (104 aa)) constitute a tRNA-binding domain.

It belongs to the class-I aminoacyl-tRNA synthetase family. MetG type 1 subfamily. Homodimer. Zn(2+) serves as cofactor.

It is found in the cytoplasm. The catalysed reaction is tRNA(Met) + L-methionine + ATP = L-methionyl-tRNA(Met) + AMP + diphosphate. Its function is as follows. Is required not only for elongation of protein synthesis but also for the initiation of all mRNA translation through initiator tRNA(fMet) aminoacylation. The sequence is that of Methionine--tRNA ligase from Xanthomonas euvesicatoria pv. vesicatoria (strain 85-10) (Xanthomonas campestris pv. vesicatoria).